Consider the following 368-residue polypeptide: H-2 class I histocompatibility antigen, K-W28 alpha chain (368 aa).

The N-terminal stretch at 1-21 (MAPCMLLLLLAAALAPTQTRA) is a signal peptide. The tract at residues 22 to 111 (GPHSLRYFHT…LLRYYNQSAG (90 aa)) is alpha-1. At 22-305 (GPHSLRYFHT…EPPPSAVSNT (284 aa)) the chain is on the extracellular side. Asn-107 is a glycosylation site (N-linked (GlcNAc...) asparagine). The interval 112–203 (GSHTIQRMYG…KNGNATLLRT (92 aa)) is alpha-2. Cys-122 and Cys-185 are joined by a disulfide. Residue Asn-197 is glycosylated (N-linked (GlcNAc...) asparagine). Residues 204-295 (DSPKAHVTHH…GLPKPLTLRW (92 aa)) are alpha-3. Residues 206–292 (PKAHVTHHSR…YHQGLPKPLT (87 aa)) enclose the Ig-like C1-type domain. The cysteines at positions 224 and 280 are disulfide-linked. Residues 296–305 (EPPPSAVSNT) are connecting peptide. A helical transmembrane segment spans residues 306 to 329 (VIIAVLVVLGAAIVTGAVVAFVMM). Over 330–368 (RRRNTGGKGGDYALAPGSQTSDLSLPDCKVMVHDPHSLA) the chain is Cytoplasmic. 2 positions are modified to phosphoserine: Ser-350 and Ser-353.

This sequence belongs to the MHC class I family. In terms of assembly, heterodimer of an alpha chain and a beta chain (beta-2-microglobulin).

The protein localises to the membrane. In terms of biological role, involved in the presentation of foreign antigens to the immune system. The protein is H-2 class I histocompatibility antigen, K-W28 alpha chain (H2-K1) of Mus musculus (Mouse).